A 542-amino-acid polypeptide reads, in one-letter code: Chaperonin GroEL (542 aa).

Residues 29 to 32, 86 to 90, G413, 476 to 478, and D492 contribute to the ATP site; these read TMGP, DGTTT, and NAA. A disordered region spans residues 521–542; that stretch reads KPDPNANNQAPAAPQGGMGGMM. A compositionally biased stretch (low complexity) spans 524–535; sequence PNANNQAPAAPQ.

The protein belongs to the chaperonin (HSP60) family. Forms a cylinder of 14 subunits composed of two heptameric rings stacked back-to-back. Interacts with the co-chaperonin GroES.

The protein resides in the cytoplasm. The catalysed reaction is ATP + H2O + a folded polypeptide = ADP + phosphate + an unfolded polypeptide.. Its function is as follows. Together with its co-chaperonin GroES, plays an essential role in assisting protein folding. The GroEL-GroES system forms a nano-cage that allows encapsulation of the non-native substrate proteins and provides a physical environment optimized to promote and accelerate protein folding. This chain is Chaperonin GroEL, found in Limosilactobacillus reuteri subsp. reuteri (strain JCM 1112) (Lactobacillus reuteri).